The chain runs to 552 residues: DUF724 domain-containing protein 10 (552 aa).

The disordered stretch occupies residues 308–361 (SSLTQGSGDKTEVETQRKTFPKKTLPRNQNGSGNDSTLENENSNRKRKREENLC). A compositionally biased stretch (polar residues) spans 333–348 (PRNQNGSGNDSTLENE). In terms of domain architecture, DUF724 spans 371–543 (ILFEKKLPVW…LEFQATASAP (173 aa)).

Expressed at low levels in leaves, stems, flowers and siliques.

May be involved in the polar growth of plant cells via transportation of RNAs. This chain is DUF724 domain-containing protein 10, found in Arabidopsis thaliana (Mouse-ear cress).